Consider the following 295-residue polypeptide: Protoheme IX farnesyltransferase (295 aa).

The next 9 helical transmembrane spans lie at 27-47, 48-68, 93-115, 119-136, 147-167, 175-195, 219-239, 247-267, and 275-295; these read IMYL…GNIH, PFIG…AGAI, IARS…VMMI, YLSG…SLVY, NIVI…TSVT, LILF…LSLL, IYIL…GIFL, TCAI…FVSI, and MFTY…ISSF.

This sequence belongs to the UbiA prenyltransferase family. Protoheme IX farnesyltransferase subfamily.

The protein localises to the cell inner membrane. It carries out the reaction heme b + (2E,6E)-farnesyl diphosphate + H2O = Fe(II)-heme o + diphosphate. The protein operates within porphyrin-containing compound metabolism; heme O biosynthesis; heme O from protoheme: step 1/1. Functionally, converts heme B (protoheme IX) to heme O by substitution of the vinyl group on carbon 2 of heme B porphyrin ring with a hydroxyethyl farnesyl side group. The protein is Protoheme IX farnesyltransferase of Ehrlichia chaffeensis (strain ATCC CRL-10679 / Arkansas).